The primary structure comprises 823 residues: Dolichyl-diphosphooligosaccharide--protein glycosyltransferase subunit STT3B (823 aa).

Residues 1–58 form a disordered region; the sequence is MAEPSAPESKHKSSLNSSPWSGLMALGNSRHGHHGPGTQSASSAAAPKPGPPAGLSGG. Alanine 2 is modified (N-acetylalanine). The Cytoplasmic segment spans residues 2–41; the sequence is AEPSAPESKHKSSLNSSPWSGLMALGNSRHGHHGPGTQSA. 3 positions are modified to phosphoserine: serine 13, serine 18, and serine 29. Residues 42–83 traverse the membrane as a helical segment; sequence SSAAAPKPGPPAGLSGGLSQPAGWQSLLSFTILFLAWLAGFS. Residues 84 to 170 are Lumenal-facing; sequence SRLFAVIRFE…VHIRDVCVFL (87 aa). Residues 98–100 carry the DXD motif 1 motif; that stretch reads EFD. Aspartate 100 lines the Mn(2+) pocket. The chain crosses the membrane as a helical span at residues 171–189; sequence APTFSGLTSISTFLLTREL. Over 190–191 the chain is Cytoplasmic; sequence WN. Residues 192–209 traverse the membrane as a helical segment; sequence QGAGLLAACFIAIVPGYI. Over 210–220 the chain is Lumenal; it reads SRSVAGSFDNE. Aspartate 218 and glutamate 220 together coordinate Mn(2+). The short motif at 218-220 is the DXD motif 2 element; sequence DNE. A helical transmembrane segment spans residues 221 to 240; the sequence is GIAIFALQFTYYLWVKSVKT. The Cytoplasmic segment spans residues 241-242; it reads GS. A helical transmembrane segment spans residues 243–257; the sequence is VFWTMCCCLSYFYMV. Over 258-262 the chain is Lumenal; that stretch reads SAWGG. The chain crosses the membrane as a helical span at residues 263–279; that stretch reads YVFIINLIPLHVFVLLL. Over 280–284 the chain is Cytoplasmic; that stretch reads MQRYS. The helical transmembrane segment at 285–310 threads the bilayer; it reads KRVYIAYSTFYIVGLILSMQIPFVGF. Topologically, residues 311–318 are lumenal; sequence QPIRTSEH. The chain crosses the membrane as a helical span at residues 319-338; it reads MAAAGVFALLQAYAFLQYLR. The Cytoplasmic segment spans residues 339–347; that stretch reads DRLTKQEFQ. A helical transmembrane segment spans residues 348 to 368; the sequence is TLFFLGVSLAAGAVFLSVIYL. Residues 369–407 lie on the Lumenal side of the membrane; the sequence is TYTGYIAPWSGRFYSLWDTGYAKIHIPIIASVSEHQPTT. An SVSE motif motif is present at residues 399-402; that stretch reads SVSE. The helical transmembrane segment at 408–430 threads the bilayer; that stretch reads WVSFFFDLHILVCTFPAGLWFCI. The Cytoplasmic segment spans residues 431-436; it reads KNINDE. Residues 437–453 traverse the membrane as a helical segment; it reads RVFVALYAISAVYFAGV. At 454 to 457 the chain is on the lumenal side; it reads MVRL. Arginine 456 is a dolichyl diphosphooligosaccharide binding site. The helical transmembrane segment at 458 to 479 threads the bilayer; sequence MLTLTPVVCMLSAIAFSNVFEH. Topologically, residues 480–523 are cytoplasmic; it reads YLGDDMKRENPPVEDSSDEDDKRNPGNLYDKAGKVRKHVTEQEK. A disordered region spans residues 487–526; the sequence is RENPPVEDSSDEDDKRNPGNLYDKAGKVRKHVTEQEKPEE. Serine 495 and serine 496 each carry phosphoserine. Residues 517–526 show a composition bias toward basic and acidic residues; that stretch reads HVTEQEKPEE. Residues 524–549 traverse the membrane as a helical segment; the sequence is PEEGLGPNIKSIVTMLMLMLLMMFAV. The Lumenal portion of the chain corresponds to 550–823; the sequence is HCTWVTSNAY…KGKKTSKKTV (274 aa). Residues 601-603 form an interacts with target acceptor peptide in protein substrate region; sequence WWD. The short motif at 601–605 is the WWDYG motif element; the sequence is WWDYG. Tyrosine 606 lines the dolichyl diphosphooligosaccharide pocket. 2 N-linked (GlcNAc...) asparagine glycosylation sites follow: asparagine 613 and asparagine 620. Asparagine 624 carries an N-linked (GlcNAc...) (high mannose) asparagine glycan. A glycan (N-linked (GlcNAc...) asparagine) is linked at asparagine 638. A DK motif motif is present at residues 668–675; it reads DINKFLWM.

This sequence belongs to the STT3 family. Component of the oligosaccharyltransferase (OST) complex. There are 2 OST complexes, OST-A and OST-B, which contain STT3A or STT3B as catalytic subunit, respectively. OST-A and OST-B contain common core subunits RPN1, RPN2, OST48, OST4, DAD1 and TMEM258, and OST-B contains either MAGT1 or TUSC3 as specific accessory subunit. Mg(2+) serves as cofactor. The cofactor is Mn(2+).

Its subcellular location is the endoplasmic reticulum membrane. It carries out the reaction a di-trans,poly-cis-dolichyl diphosphooligosaccharide + L-asparaginyl-[protein] = N(4)-(oligosaccharide-(1-&gt;4)-N-acetyl-beta-D-glucosaminyl-(1-&gt;4)-N-acetyl-beta-D-glucosaminyl)-L-asparaginyl-[protein] + a di-trans,poly-cis-dolichyl diphosphate + H(+). Its pathway is protein modification; protein glycosylation. Its function is as follows. Catalytic subunit of the oligosaccharyl transferase (OST) complex that catalyzes the initial transfer of a defined glycan (Glc(3)Man(9)GlcNAc(2) in eukaryotes) from the lipid carrier dolichol-pyrophosphate to an asparagine residue within an Asn-X-Ser/Thr consensus motif in nascent polypeptide chains, the first step in protein N-glycosylation. N-glycosylation occurs cotranslationally and the complex associates with the Sec61 complex at the channel-forming translocon complex that mediates protein translocation across the endoplasmic reticulum (ER). All subunits are required for a maximal enzyme activity. This subunit contains the active site and the acceptor peptide and donor lipid-linked oligosaccharide (LLO) binding pockets. STT3B is present in a small subset of OST complexes and mediates both cotranslational and post-translational N-glycosylation of target proteins: STT3B-containing complexes are required for efficient post-translational glycosylation and while they are less competent than STT3A-containing complexes for cotranslational glycosylation, they have the ability to mediate glycosylation of some nascent sites that are not accessible for STT3A. STT3B-containing complexes also act post-translationally and mediate modification of skipped glycosylation sites in unfolded proteins. Plays a role in ER-associated degradation (ERAD) pathway that mediates ubiquitin-dependent degradation of misfolded endoplasmic reticulum proteins by mediating N-glycosylation of unfolded proteins, which are then recognized by the ERAD pathway and targeted for degradation. This chain is Dolichyl-diphosphooligosaccharide--protein glycosyltransferase subunit STT3B, found in Mus musculus (Mouse).